Consider the following 649-residue polypeptide: MGSNTSPGQADPLESENESSLTSRFLPNKRDGGKDNESVIPEKEEPDLNEPVLAVPLPKSRYALTKRSSSSEYPRRSASTSAKKNVIPITRSYSTTFFSKTNDQPTVTGNQDKPISRLRASKLQIQNFWNYICFELLANDTVPANPIKEKHVENFLATPYAIEKTFLFGWFVSVDSFLYIFTLFPIRVLISFFTLSRCIFQGLFSTFFHRNSSPNRSLPRSRKIDLLKLLLIFSTSILIRKIDVSRLYHIIRAQASIRFYVLYNVLEIADRLCCALGQDVLDCLFSNHILSFNFWNPAGWMTFFYYFAISLAYMVLHTLVLLYQIITLNVTVNSYSNAVLALLMSNQLVEIKGAVFKKFEKENLFQLTCSDVVERFQITIMVIIIFLRNLAELYTTSSLDQPLLTFKRLKTLLAPFFWVIGSELFVDWLKHAFIIKFNYIKPSIYSRFTDVLCHDYVASGAQLTQTVTGCSQQVARRMGLPVLPLVCVFIRTSMQTWSMFRSTHSMKQEIAKSIGTIFPTKDNYVYYLPNKEANTYNAGKEASWETLLLSVVRGKSGIAFLFFMAIMLKLLLGKAILAITQSRYESMQQREEKINSWERERKANNFFRGHIEIDKKTKDFLNNSKDDLPVPKSPLLTLERYAMHSKRIW.

The segment at 1–55 is disordered; sequence MGSNTSPGQADPLESENESSLTSRFLPNKRDGGKDNESVIPEKEEPDLNEPVLAV. The Cytoplasmic portion of the chain corresponds to 1 to 165; sequence MGSNTSPGQA…LATPYAIEKT (165 aa). The span at 28-43 shows a compositional bias: basic and acidic residues; the sequence is NKRDGGKDNESVIPEK. Serine 94 carries the phosphoserine modification. The chain crosses the membrane as a helical span at residues 166 to 186; sequence FLFGWFVSVDSFLYIFTLFPI. Over 187-302 the chain is Lumenal; sequence RVLISFFTLS…NFWNPAGWMT (116 aa). Residue asparagine 215 is glycosylated (N-linked (GlcNAc...) asparagine). A helical membrane pass occupies residues 303 to 323; the sequence is FFYYFAISLAYMVLHTLVLLY. The Cytoplasmic segment spans residues 324-366; that stretch reads QIITLNVTVNSYSNAVLALLMSNQLVEIKGAVFKKFEKENLFQ. A helical membrane pass occupies residues 367–387; that stretch reads LTCSDVVERFQITIMVIIIFL. Over 388–414 the chain is Lumenal; sequence RNLAELYTTSSLDQPLLTFKRLKTLLA. Residues 415 to 435 traverse the membrane as a helical segment; that stretch reads PFFWVIGSELFVDWLKHAFII. Residues 436–479 are Cytoplasmic-facing; it reads KFNYIKPSIYSRFTDVLCHDYVASGAQLTQTVTGCSQQVARRMG. The helical transmembrane segment at 480-500 threads the bilayer; sequence LPVLPLVCVFIRTSMQTWSMF. Topologically, residues 501–557 are lumenal; sequence RSTHSMKQEIAKSIGTIFPTKDNYVYYLPNKEANTYNAGKEASWETLLLSVVRGKSG. A helical membrane pass occupies residues 558–578; sequence IAFLFFMAIMLKLLLGKAILA. Residues 579–649 lie on the Cytoplasmic side of the membrane; it reads ITQSRYESMQ…RYAMHSKRIW (71 aa).

The protein belongs to the TAPT1 family. In terms of assembly, interacts with slp1.

It is found in the endoplasmic reticulum membrane. May be involved in membrane protein folding. This Schizosaccharomyces pombe (strain 972 / ATCC 24843) (Fission yeast) protein is Endoplasmic reticulum membrane protein 65.